Here is a 263-residue protein sequence, read N- to C-terminus: uncharacterized protein (263 aa).

The region spanning 6-121 (TAIIADDEPL…RLQTTCERVK (116 aa)) is the Response regulatory domain. Position 58 is a 4-aspartylphosphate (Asp-58). The region spanning 158–263 (IKATQGDDIH…RASQSLFKGM (106 aa)) is the HTH LytTR-type domain.

This is an uncharacterized protein from Vibrio parahaemolyticus serotype O3:K6 (strain RIMD 2210633).